The chain runs to 644 residues: Probable potassium transport system protein Kup 2 (644 aa).

Positions 1–21 (MSSDAAAVADRDGSSPGHGGH) are disordered. Transmembrane regions (helical) follow at residues 26–46 (LGAM…TSPL), 69–89 (VLSL…VAII), 120–140 (IILL…ITPA), 155–175 (AGFA…LFMI), 183–203 (VGML…VLGT), 231–251 (LAFL…ALYA), 265–285 (WLVF…AMIL), 312–332 (LVIL…TGAF), 360–380 (IYIP…VMSF), 390–410 (YGIA…VVLI), 419–439 (LAAP…GANL), and 444–464 (DGGW…TTWG).

The protein belongs to the HAK/KUP transporter (TC 2.A.72) family.

Its subcellular location is the cell inner membrane. The catalysed reaction is K(+)(in) + H(+)(in) = K(+)(out) + H(+)(out). Functionally, transport of potassium into the cell. Likely operates as a K(+):H(+) symporter. The sequence is that of Probable potassium transport system protein Kup 2 from Rhizorhabdus wittichii (strain DSM 6014 / CCUG 31198 / JCM 15750 / NBRC 105917 / EY 4224 / RW1) (Sphingomonas wittichii).